Consider the following 757-residue polypeptide: 5-methyltetrahydropteroyltriglutamate--homocysteine methyltransferase (757 aa).

Residues 16–19 and Lys-112 each bind 5-methyltetrahydropteroyltri-L-glutamate; that span reads RELK. Residues 433–435 and Glu-486 contribute to the L-homocysteine site; that span reads IGS. L-methionine-binding positions include 433 to 435 and Glu-486; that span reads IGS. 5-methyltetrahydropteroyltri-L-glutamate-binding positions include 517–518 and Trp-563; that span reads RC. Residue Asp-601 coordinates L-homocysteine. Asp-601 provides a ligand contact to L-methionine. Glu-607 provides a ligand contact to 5-methyltetrahydropteroyltri-L-glutamate. Residues His-643, Cys-645, and Glu-667 each coordinate Zn(2+). The active-site Proton donor is His-696. Cys-728 contacts Zn(2+).

This sequence belongs to the vitamin-B12 independent methionine synthase family. Zn(2+) serves as cofactor.

It carries out the reaction 5-methyltetrahydropteroyltri-L-glutamate + L-homocysteine = tetrahydropteroyltri-L-glutamate + L-methionine. It functions in the pathway amino-acid biosynthesis; L-methionine biosynthesis via de novo pathway; L-methionine from L-homocysteine (MetE route): step 1/1. Catalyzes the transfer of a methyl group from 5-methyltetrahydrofolate to homocysteine resulting in methionine formation. In Pasteurella multocida (strain Pm70), this protein is 5-methyltetrahydropteroyltriglutamate--homocysteine methyltransferase.